The primary structure comprises 310 residues: Thioredoxin reductase (310 aa).

34-41 (NGIQPGGQ) lines the FAD pocket. Cys135 and Cys138 are joined by a disulfide. 281-290 (DVQDKIYRQA) is a binding site for FAD.

Belongs to the class-II pyridine nucleotide-disulfide oxidoreductase family. As to quaternary structure, homodimer. FAD serves as cofactor.

Its subcellular location is the cytoplasm. It catalyses the reaction [thioredoxin]-dithiol + NADP(+) = [thioredoxin]-disulfide + NADPH + H(+). This chain is Thioredoxin reductase (trxB), found in Rickettsia bellii (strain RML369-C).